A 368-amino-acid chain; its full sequence is ATP-dependent (S)-NAD(P)H-hydrate dehydratase (368 aa).

In terms of domain architecture, YjeF C-terminal spans 3–359 (SPSKKLLANV…DEVHGSFLDL (357 aa)). Residues G120 and 173–179 (NVVEFAR) contribute to the (6S)-NADPHX site. Residues 217–221 (KGPHD) and 236–245 (GGLKRSGGQG) each bind ATP. Position 246 (D246) interacts with (6S)-NADPHX.

The protein belongs to the NnrD/CARKD family. The cofactor is Mg(2+).

It is found in the cytoplasm. It carries out the reaction (6S)-NADHX + ATP = ADP + phosphate + NADH + H(+). The catalysed reaction is (6S)-NADPHX + ATP = ADP + phosphate + NADPH + H(+). Functionally, catalyzes the dehydration of the S-form of NAD(P)HX at the expense of ATP, which is converted to ADP. Together with NAD(P)HX epimerase, which catalyzes the epimerization of the S- and R-forms, the enzyme allows the repair of both epimers of NAD(P)HX, a damaged form of NAD(P)H that is a result of enzymatic or heat-dependent hydration. The protein is ATP-dependent (S)-NAD(P)H-hydrate dehydratase of Ajellomyces capsulatus (strain G186AR / H82 / ATCC MYA-2454 / RMSCC 2432) (Darling's disease fungus).